The chain runs to 33 residues: MNLEIVAQLTVLALIVVSGPLVIALLAVRKGNL.

Residues 5–25 traverse the membrane as a helical segment; sequence IVAQLTVLALIVVSGPLVIAL.

This sequence belongs to the Psb30/Ycf12 family. In terms of assembly, PSII is composed of 1 copy each of membrane proteins PsbA, PsbB, PsbC, PsbD, PsbE, PsbF, PsbH, PsbI, PsbJ, PsbK, PsbL, PsbM, PsbT, PsbX, PsbY, PsbZ, Psb30/Ycf12, peripheral proteins of the oxygen-evolving complex and a large number of cofactors. It forms dimeric complexes.

The protein localises to the plastid. The protein resides in the chloroplast thylakoid membrane. Its function is as follows. A core subunit of photosystem II (PSII), probably helps stabilize the reaction center. The polypeptide is Photosystem II reaction center protein Psb30 (Angiopteris evecta (Mule's foot fern)).